We begin with the raw amino-acid sequence, 541 residues long: Chaperonin GroEL 1 (541 aa).

Residues 29 to 32 (TIGP), 86 to 90 (DGTTT), G415, 479 to 481 (NAA), and D495 each bind ATP.

It belongs to the chaperonin (HSP60) family. As to quaternary structure, forms a cylinder of 14 subunits composed of two heptameric rings stacked back-to-back. Interacts with the co-chaperonin GroES.

It localises to the cytoplasm. It catalyses the reaction ATP + H2O + a folded polypeptide = ADP + phosphate + an unfolded polypeptide.. Functionally, together with its co-chaperonin GroES, plays an essential role in assisting protein folding. The GroEL-GroES system forms a nano-cage that allows encapsulation of the non-native substrate proteins and provides a physical environment optimized to promote and accelerate protein folding. This Streptomyces coelicolor (strain ATCC BAA-471 / A3(2) / M145) protein is Chaperonin GroEL 1.